The primary structure comprises 496 residues: probable leucine aminopeptidase 2 (496 aa).

The N-terminal stretch at 1 to 16 is a signal peptide; it reads MRSLLWASLLSGVLAG. A PA domain is found at 111–205; that stretch reads PSVEVTADVA…SLEDGQKLIK (95 aa). N-linked (GlcNAc...) asparagine glycosylation is present at N224. 2 residues coordinate Zn(2+): H248 and D260. Residue E292 is the Proton acceptor of the active site. Position 293 (E293) interacts with Zn(2+). N307 is a glycosylation site (N-linked (GlcNAc...) asparagine). Zn(2+) is bound at residue D321. N-linked (GlcNAc...) asparagine glycans are attached at residues N341 and N402. H419 serves as a coordination point for Zn(2+). N424 and N458 each carry an N-linked (GlcNAc...) asparagine glycan. The segment at 475-496 is disordered; the sequence is KRAPKTHAHVSGSGCWHSQVEA.

Belongs to the peptidase M28 family. M28A subfamily. In terms of assembly, monomer. It depends on Zn(2+) as a cofactor.

It localises to the secreted. In terms of biological role, extracellular aminopeptidase that releases a wide variety of amino acids from natural peptides. This is probable leucine aminopeptidase 2 (lap2) from Aspergillus oryzae (strain ATCC 42149 / RIB 40) (Yellow koji mold).